The following is a 193-amino-acid chain: Small ribosomal subunit protein eS7 (193 aa).

It belongs to the eukaryotic ribosomal protein eS7 family.

In Dictyostelium discoideum (Social amoeba), this protein is Small ribosomal subunit protein eS7 (rps7).